The chain runs to 434 residues: Nicotinate phosphoribosyltransferase (434 aa).

Phosphohistidine; by autocatalysis is present on H242.

The protein belongs to the NAPRTase family. In terms of processing, transiently phosphorylated on a His residue during the reaction cycle. Phosphorylation strongly increases the affinity for substrates and increases the rate of nicotinate D-ribonucleotide production. Dephosphorylation regenerates the low-affinity form of the enzyme, leading to product release.

The enzyme catalyses nicotinate + 5-phospho-alpha-D-ribose 1-diphosphate + ATP + H2O = nicotinate beta-D-ribonucleotide + ADP + phosphate + diphosphate. It participates in cofactor biosynthesis; NAD(+) biosynthesis; nicotinate D-ribonucleotide from nicotinate: step 1/1. Functionally, catalyzes the synthesis of beta-nicotinate D-ribonucleotide from nicotinate and 5-phospho-D-ribose 1-phosphate at the expense of ATP. The chain is Nicotinate phosphoribosyltransferase from Rhizobium rhizogenes (strain K84 / ATCC BAA-868) (Agrobacterium radiobacter).